Reading from the N-terminus, the 596-residue chain is Capsid protein VP1 (596 aa).

This sequence belongs to the microviridae F protein family.

It localises to the virion. The protein localises to the host cytoplasm. Functionally, assembles to form an icosahedral capsid with a T=1 symmetry. This Chlamydia phage 1 (Bacteriophage Chp1) protein is Capsid protein VP1.